We begin with the raw amino-acid sequence, 61 residues long: Cytotoxin homolog 2 (61 aa).

Disulfide bonds link C3–C22, C15–C39, C43–C54, and C55–C60.

This sequence belongs to the three-finger toxin family. Short-chain subfamily. Orphan group XV sub-subfamily. Expressed by the venom gland.

It is found in the secreted. The protein resides in the target cell membrane. Its function is as follows. Has low cytotoxic activity. The sequence is that of Cytotoxin homolog 2 from Naja melanoleuca (Forest cobra).